Reading from the N-terminus, the 365-residue chain is Probable dual-specificity RNA methyltransferase RlmN (365 aa).

The active-site Proton acceptor is Glu-108. The Radical SAM core domain occupies 114 to 347 (HNYGNSVCVT…VTIRREHGHD (234 aa)). The cysteines at positions 121 and 352 are disulfide-linked. [4Fe-4S] cluster contacts are provided by Cys-128, Cys-132, and Cys-135. S-adenosyl-L-methionine is bound by residues 178 to 179 (GE), Ser-210, 233 to 235 (SLH), and Asn-309. The active-site S-methylcysteine intermediate is the Cys-352.

This sequence belongs to the radical SAM superfamily. RlmN family. It depends on [4Fe-4S] cluster as a cofactor.

It localises to the cytoplasm. It catalyses the reaction adenosine(2503) in 23S rRNA + 2 reduced [2Fe-2S]-[ferredoxin] + 2 S-adenosyl-L-methionine = 2-methyladenosine(2503) in 23S rRNA + 5'-deoxyadenosine + L-methionine + 2 oxidized [2Fe-2S]-[ferredoxin] + S-adenosyl-L-homocysteine. The enzyme catalyses adenosine(37) in tRNA + 2 reduced [2Fe-2S]-[ferredoxin] + 2 S-adenosyl-L-methionine = 2-methyladenosine(37) in tRNA + 5'-deoxyadenosine + L-methionine + 2 oxidized [2Fe-2S]-[ferredoxin] + S-adenosyl-L-homocysteine. Its function is as follows. Specifically methylates position 2 of adenine 2503 in 23S rRNA and position 2 of adenine 37 in tRNAs. This is Probable dual-specificity RNA methyltransferase RlmN from Geobacillus kaustophilus (strain HTA426).